The chain runs to 463 residues: GTPase Der (463 aa).

2 EngA-type G domains span residues 27–190 (PVVA…PEVG) and 200–373 (RRVA…ASWD). GTP-binding positions include 33-40 (GRPNVGKS), 80-84 (DTGGW), 142-145 (NKVD), 206-213 (GKPNVGKS), 253-257 (DTAGL), and 318-321 (NKWD). Positions 374 to 456 (TRIATGPLNT…PIRVNVRVRE (83 aa)) constitute a KH-like domain.

The protein belongs to the TRAFAC class TrmE-Era-EngA-EngB-Septin-like GTPase superfamily. EngA (Der) GTPase family. Associates with the 50S ribosomal subunit.

In terms of biological role, GTPase that plays an essential role in the late steps of ribosome biogenesis. This Mycobacterium bovis (strain ATCC BAA-935 / AF2122/97) protein is GTPase Der.